The chain runs to 1181 residues: Cellulose synthase-like protein D5 (1181 aa).

Polar residues predominate over residues 1-17 (MVKSAASQSPSPVTITV). 2 disordered regions span residues 1–70 (MVKS…DEGR) and 202–229 (KEPYRDINDDPETEEEDEEDEAKPLPQM). The span at 48–59 (SSRATRRTSISS) shows a compositional bias: low complexity. Positions 210–222 (DDPETEEEDEEDE) are enriched in acidic residues. A run of 2 helical transmembrane segments spans residues 312 to 332 (AIISPYRLLIALRLVALGLFL) and 343 to 363 (AMWLWGMSTTCELWFALSWLL). Asp-443 is a catalytic residue. A coiled-coil region spans residues 497-542 (VRERRRVKREYDEFKVRINSLPEAIRRRSDAYNVHEELRAKKKQME). Asp-884 is an active-site residue. 6 helical membrane passes run 966–986 (LFLIVYCILPAISLFSGQFIV), 991–1011 (ITFLIYLLSITLTLCMLSLLE), 1038–1058 (PAAVLQGLLKVIAGVDISFTL), 1082–1102 (FLMVPPLTIMMVNMIAIAVGL), 1116–1136 (LVGGVFFSFWVLCHLYPFAKG), and 1146–1166 (TIVFVWSGLLSIIVSLLWVYI).

The protein belongs to the glycosyltransferase 2 family. Plant cellulose synthase-like D subfamily. Expressed in vascular tissues.

The protein resides in the golgi apparatus membrane. Its function is as follows. Involved in stem and root growth. Possesses xylan and homogalacturonan synthase activity. In Arabidopsis thaliana (Mouse-ear cress), this protein is Cellulose synthase-like protein D5 (CSLD5).